Reading from the N-terminus, the 1077-residue chain is Teashirt homolog 1 (1077 aa).

3 disordered regions span residues 1–109 (MPRR…VSYP), 139–195 (SGST…SSSS), and 269–298 (GHYRDDNRDKDSEKTKRWSKPRKRSLMEME). A compositionally biased stretch (acidic residues) spans 26 to 36 (IDEEHVEDDGL). Composition is skewed to polar residues over residues 57–71 (QSYQNSPVSSATNQD) and 139–152 (SGSTTSTNDASQKE). Residues 164–195 (PVSTTGPTTSTPSTSCSSSTSHSSTTSTSSSS) are compositionally biased toward low complexity. C2H2-type zinc fingers lie at residues 246-270 (FRCKDCSAAYDTLVELTVHMNETGH) and 307-331 (LKCMYCGHSFESLQDLSVHMIKTKH). A compositionally biased stretch (basic and acidic residues) spans 269 to 284 (GHYRDDNRDKDSEKTK). Residues 416 to 440 (LKCMECGSSHDTLQQLTAHMMVTGH) form a C2H2-type 3; atypical zinc finger. 2 disordered regions span residues 467–549 (SIPL…KGGL) and 647–720 (TGKV…EPLK). Composition is skewed to basic and acidic residues over residues 496–528 (SEEKKEPEKEKPPVAGDAEKIKEESEDSLEKFE), 647–665 (TGKVNIKKEERPPEKEKSS), and 675–708 (KENKDFPKTEEVSGKPQKKGPEAETGKAKKEGPL). At serine 765 the chain carries Phosphoserine. The interval 848–873 (TGRLTPKSSTPSTVSEKSDADGSSFE) is disordered. A compositionally biased stretch (polar residues) spans 853 to 862 (PKSSTPSTVS). Residues 885–955 (RKGRQSNWNP…NVKYQLRRTG (71 aa)) constitute a DNA-binding region (homeobox; atypical). 2 C2H2-type zinc fingers span residues 970 to 992 (FFCNDCASQFRTASTYISHLETH) and 1037 to 1060 (FQCKLCNRTFASKHAVKLHLSKTH).

Belongs to the teashirt C2H2-type zinc-finger protein family. As to quaternary structure, interacts (via homeobox domain) with APBB1 (via PID domain 1). As to expression, expressed in brain; strongly reduced in post-mortem elderly subjects with Alzheimer disease.

The protein localises to the nucleus. Functionally, probable transcriptional regulator involved in developmental processes. May act as a transcriptional repressor (Potential). The sequence is that of Teashirt homolog 1 (TSHZ1) from Homo sapiens (Human).